Reading from the N-terminus, the 132-residue chain is Chemokine-like protein TAFA-5 (132 aa).

An N-terminal signal peptide occupies residues 1–43 (MAPSPRTGSRQDATALPSMSSTFWAFMILASLLIAYCSQLAAG). The N-linked (GlcNAc...) asparagine glycan is linked to N113.

It belongs to the TAFA family.

The protein localises to the secreted. Acts as a chemokine-like protein by regulating cell proliferation and migration through activation of G protein-coupled receptors (GPCRs), such as S1PR2 and FPR2. Stimulates chemotactic migration of macrophages mediated by the MAPK3/ERK1 and AKT1 pathway. Blocks TNFSF11/RANKL-induced osteoclast formation from macrophages by inhibiting up-regulation of osteoclast fusogenic and differentiation genes. Stimulation of macrophage migration and inhibition of osteoclast formation is mediated through the GPCR FPR2. Acts as an adipokine by negatively regulating vascular smooth muscle cell (VSMC) proliferation and migration in response to platelet-derived growth factor stimulation via GPCR S1PR2 and G protein GNA12/GNA13-transmitted RHOA signaling. Inhibits injury-induced cell proliferation and neointima formation in the femoral arteries. This is Chemokine-like protein TAFA-5 (TAFA5) from Bos taurus (Bovine).